The sequence spans 609 residues: Glutamine--fructose-6-phosphate aminotransferase [isomerizing] (609 aa).

Residue cysteine 2 is the Nucleophile; for GATase activity of the active site. The Glutamine amidotransferase type-2 domain maps to 2–218; it reads CGIVGAIAQR…EGDIAEITRR (217 aa). 2 consecutive SIS domains span residues 286-426 and 458-599; these read ADDL…LKGL and LAED…VDQP. Lysine 604 acts as the For Fru-6P isomerization activity in catalysis.

Homodimer.

It localises to the cytoplasm. It catalyses the reaction D-fructose 6-phosphate + L-glutamine = D-glucosamine 6-phosphate + L-glutamate. Its function is as follows. Catalyzes the first step in hexosamine metabolism, converting fructose-6P into glucosamine-6P using glutamine as a nitrogen source. The protein is Glutamine--fructose-6-phosphate aminotransferase [isomerizing] of Salmonella typhi.